We begin with the raw amino-acid sequence, 280 residues long: 2-dehydro-3-deoxyphosphooctonate aldolase (280 aa).

The protein belongs to the KdsA family.

The protein resides in the cytoplasm. The enzyme catalyses D-arabinose 5-phosphate + phosphoenolpyruvate + H2O = 3-deoxy-alpha-D-manno-2-octulosonate-8-phosphate + phosphate. Its pathway is carbohydrate biosynthesis; 3-deoxy-D-manno-octulosonate biosynthesis; 3-deoxy-D-manno-octulosonate from D-ribulose 5-phosphate: step 2/3. It functions in the pathway bacterial outer membrane biogenesis; lipopolysaccharide biosynthesis. This Thioalkalivibrio sulfidiphilus (strain HL-EbGR7) protein is 2-dehydro-3-deoxyphosphooctonate aldolase.